Consider the following 442-residue polypeptide: tRNA modification GTPase MnmE (442 aa).

Residues arginine 24, glutamate 82, and lysine 120 each coordinate (6S)-5-formyl-5,6,7,8-tetrahydrofolate. Residues 217–367 (GLHIVITGEP…LVSVIKEKVE (151 aa)) enclose the TrmE-type G domain. GTP-binding positions include 227 to 232 (NVGKST), 246 to 252 (SEYVGTT), and 271 to 274 (DTAG). Mg(2+) is bound by residues serine 231 and threonine 252. Lysine 442 provides a ligand contact to (6S)-5-formyl-5,6,7,8-tetrahydrofolate.

The protein belongs to the TRAFAC class TrmE-Era-EngA-EngB-Septin-like GTPase superfamily. TrmE GTPase family. As to quaternary structure, homodimer. Heterotetramer of two MnmE and two MnmG subunits. K(+) is required as a cofactor.

The protein localises to the cytoplasm. Its function is as follows. Exhibits a very high intrinsic GTPase hydrolysis rate. Involved in the addition of a carboxymethylaminomethyl (cmnm) group at the wobble position (U34) of certain tRNAs, forming tRNA-cmnm(5)s(2)U34. The sequence is that of tRNA modification GTPase MnmE from Wolbachia sp. subsp. Brugia malayi (strain TRS).